We begin with the raw amino-acid sequence, 62 residues long: Omega-lycotoxin-Am1e (62 aa).

A propeptide spanning residues 1-15 (EDEVEETLPVAEEGR) is cleaved from the precursor. Cystine bridges form between C19–C34, C26–C39, C33–C59, and C41–C57.

The protein belongs to the neurotoxin omega-lctx family. Expressed by the venom gland.

Its subcellular location is the secreted. Its function is as follows. Modulates Cav2.1/CACNA1A voltage-gated calcium channels (P/Q-type currents) in rat cerebellar Purkinje cells and hippocampal CA1-CA3 neurons. At saturating concentrations (&gt;10 nM) decelerates activation kinetics and slightly increases peak amplitude without affecting deactivation kinetics. In vivo, does not cause death when intravenously injected into mice. In rat models, through its activity on Cav2.1/CACNA1A, has an ameliorative effect on memory defects provoked by hyperstimulation of N-methyl-D-aspartate receptors (NMDARs) in the hippocampus. The chain is Omega-lycotoxin-Am1e from Alopecosa marikovskyi (Wolf spider).